A 361-amino-acid chain; its full sequence is Trans-enoyl reductase gkaC (361 aa).

One can recognise an Enoyl reductase (ER) domain in the interval 15-357 (EDVGSFEISR…RREISGKKMV (343 aa)). NADP(+) contacts are provided by residues 48–51 (CDWK), 172–175 (SSAS), 195–198 (SPKN), Tyr213, 260–261 (FE), and 351–352 (IS).

Belongs to the zinc-containing alcohol dehydrogenase family. As to quaternary structure, monomer.

It functions in the pathway mycotoxin biosynthesis. In terms of biological role, trans-enoyl reductasee; part of the gene cluster that mediates the biosynthesis of GKK1032, fungal natural products containing a macrocyclic para-cyclophane connected to a decahydrofluorene ring system that show potent antitumor activities. Within the pathway, the PKS-NRPS gkaA, with the help of the trans-enoyl reductase gkaC, synthesize the polyketide-tyrosyl acyl thioester product which can be reductively off-loaded by the terminal reductase (R) domain in gkaA. The PKS module of gkaA acts in combination with the trans-acting enoyl reductase gkaC to produce a methylated polyketide attached to the ACP domain. In parallel, the adenylation (A) domain of the NRPS module activated L-tyrosine, which is then transferred to the ACP domain. The condensation (C) domain subsequently links this group to the polyketide chain, forming an enzyme-bound amide. The alpha/beta hydrolase gkaG is then required to catalyze the subsequent Knoevenagel condensation that affords the 3-pyrrolin-2-one ring, whereas the three proteins gkaB, gkadX and gkaZ then function synergistically to form the cyclophane. In Penicillium citrinum, this protein is Trans-enoyl reductase gkaC.